The following is a 1856-amino-acid chain: DNA-directed RNA polymerase II subunit RPB1 (1856 aa).

C66, C69, C76, H79, C106, C109, C149, and C177 together coordinate Zn(2+). The lid loop stretch occupies residues 256 to 268 (PAVVTFGSAKNQD). The interval 314–331 (NCIPGLPTATQKGGRPLK) is rudder loop. 3 residues coordinate Mg(2+): D489, D491, and D493. Residues 827 to 839 (PSEFFFHAMGGRE) form a bridging helix region. K1260 participates in a covalent cross-link: Glycyl lysine isopeptide (Lys-Gly) (interchain with G-Cter in ubiquitin). The tract at residues 1523–1856 (PTTGGMSPGA…PSSPTYDPNS (334 aa)) is disordered. Low complexity predominate over residues 1587–1856 (SMTSPHYSPT…PSSPTYDPNS (270 aa)). 27 consecutive repeat copies span residues 1593–1599 (YSPTSPS), 1600–1606 (YSPTSPA), 1616–1622 (YSPTSPS), 1623–1629 (YSPTSPS), 1630–1636 (YSPTSPS), 1637–1643 (YSPTSPS), 1644–1650 (YSPTSPS), 1651–1657 (YSPTSPS), 1658–1664 (YSPSSPS), 1665–1671 (YSPSSPS), 1672–1678 (YSPSSPR), 1679–1685 (YSPTSPT), 1686–1692 (YSPTSPT), 1693–1699 (YSPTSPT), 1700–1706 (YSPTSPT), 1707–1713 (YSPTSPS), 1720–1726 (YSPSSPK), 1727–1733 (YSPSSPT), 1734–1740 (YSPTSPS), 1741–1747 (YSPTSPQ), 1748–1754 (YSPTSPQ), 1755–1761 (YSPSSPT), 1769–1775 (YNPTSPR), 1782–1788 (YSPTSPT), 1789–1795 (YSPTSPS), 1796–1802 (YTPSSPQ), and 1803–1809 (YSPTSPT). The tract at residues 1593-1816 (YSPTSPSYSP…SPTYTPSPSE (224 aa)) is C-terminal domain (CTD); 28 X 7 AA approximate tandem repeats of Y-[ST]-P-[ST]-S-P-[AGKNQRST]. One copy of the 28; approximate repeat lies at 1810 to 1816 (YTPSPSE).

The protein belongs to the RNA polymerase beta' chain family. As to quaternary structure, component of the RNA polymerase II (Pol II) complex consisting of 12 subunits. Interacts with sig-7. The tandem 7 residues repeats in the C-terminal domain (CTD) can be highly phosphorylated. The phosphorylation activates Pol II. Phosphorylation occurs mainly at residues 'Ser-2' and 'Ser-5' of the heptapeptide repeat and starts at the 3- to 4-cell embryonic stage. This phosphorylation also occurs in the early stages of oocyte development and is not detected in oocytes arrested at the meiotic diakinesis stage. In the somatic lineage, phosphorylation at 'Ser-2' is mediated by cdk-12 downstream of cdk-9 whereas in the germline lineage cdk-12 phosphorylates 'Ser-2' independently of cdk-9. Phosphorylation is likely mediated by cdk-7. May be dephosphorylated by fcp-1 in diakinetic oocytes and in 1-cell and 2-cell embryos. Dephosphorylated at 'Ser-5' of the heptapeptide repeats by ssup-72. The phosphorylation state is believed to result from the balanced action of site-specific CTD kinases and phosphatase, and a 'CTD code' that specifies the position of Pol II within the transcription cycle has been proposed. In terms of processing, following transcription stress, the elongating form of RNA polymerase II (RNA pol IIo) is polyubiquitinated via 'Lys-63'-linkages on Lys-1260 at DNA damage sites without leading to degradation: ubiquitination promotes RNA pol IIo backtracking to allow access by the transcription-coupled nucleotide excision repair (TC-NER) machinery. Subsequent DEF1-dependent polyubiquitination by the elongin complex via 'Lys-48'-linkages may lead to proteasome-mediated degradation; presumably at stalled RNA pol II where TC-NER has failed, to halt global transcription and enable 'last resort' DNA repair pathways.

Its subcellular location is the nucleus. The protein resides in the chromosome. It carries out the reaction RNA(n) + a ribonucleoside 5'-triphosphate = RNA(n+1) + diphosphate. Functionally, DNA-dependent RNA polymerase catalyzes the transcription of DNA into RNA using the four ribonucleoside triphosphates as substrates. Largest and catalytic component of RNA polymerase II which synthesizes mRNA precursors and many functional non-coding RNAs. Forms the polymerase active center together with the second largest subunit. Pol II is the central component of the basal RNA polymerase II transcription machinery. It is composed of mobile elements that move relative to each other. RPB1 is part of the core element with the central large cleft, the clamp element that moves to open and close the cleft and the jaws that are thought to grab the incoming DNA template. At the start of transcription, a single-stranded DNA template strand of the promoter is positioned within the central active site cleft of Pol II. A bridging helix emanates from RPB1 and crosses the cleft near the catalytic site and is thought to promote translocation of Pol II by acting as a ratchet that moves the RNA-DNA hybrid through the active site by switching from straight to bent conformations at each step of nucleotide addition. During transcription elongation, Pol II moves on the template as the transcript elongates. Elongation is influenced by the phosphorylation status of the C-terminal domain (CTD) of Pol II largest subunit (RPB1), which serves as a platform for assembly of factors that regulate transcription initiation, elongation, termination and mRNA processing. Involved in the transcription of several genes including those involved in embryogenesis. This Caenorhabditis elegans protein is DNA-directed RNA polymerase II subunit RPB1.